The chain runs to 140 residues: MAREFSRTRRIAQQLQQELAQVLQRDIKDPRIGMVTVNDVDVSRDLNYAKVYVTFFEEDKAVVEEKLAALEAAAGYVRSLVAGRMKLRVMPEIRFIYDASLIEGMRMSNLVSQVITKDKAKAAEHGREDEELDDTEQDDK.

The interval 121-140 (KAAEHGREDEELDDTEQDDK) is disordered. Positions 129–140 (DEELDDTEQDDK) are enriched in acidic residues.

This sequence belongs to the RbfA family. Monomer. Binds 30S ribosomal subunits, but not 50S ribosomal subunits or 70S ribosomes.

It is found in the cytoplasm. Its function is as follows. One of several proteins that assist in the late maturation steps of the functional core of the 30S ribosomal subunit. Associates with free 30S ribosomal subunits (but not with 30S subunits that are part of 70S ribosomes or polysomes). Required for efficient processing of 16S rRNA. May interact with the 5'-terminal helix region of 16S rRNA. This chain is Ribosome-binding factor A, found in Shewanella loihica (strain ATCC BAA-1088 / PV-4).